Here is a 34-residue protein sequence, read N- to C-terminus: U1-poneritoxin-Na2a (34 aa).

As to expression, expressed by the venom gland.

The protein resides in the secreted. Its function is as follows. May have antimicrobial properties, like most ant linear peptides. The chain is U1-poneritoxin-Na2a from Neoponera apicalis (Ant).